The following is a 100-amino-acid chain: Aspartyl/glutamyl-tRNA(Asn/Gln) amidotransferase subunit C (100 aa).

This sequence belongs to the GatC family. In terms of assembly, heterotrimer of A, B and C subunits.

It catalyses the reaction L-glutamyl-tRNA(Gln) + L-glutamine + ATP + H2O = L-glutaminyl-tRNA(Gln) + L-glutamate + ADP + phosphate + H(+). It carries out the reaction L-aspartyl-tRNA(Asn) + L-glutamine + ATP + H2O = L-asparaginyl-tRNA(Asn) + L-glutamate + ADP + phosphate + 2 H(+). Allows the formation of correctly charged Asn-tRNA(Asn) or Gln-tRNA(Gln) through the transamidation of misacylated Asp-tRNA(Asn) or Glu-tRNA(Gln) in organisms which lack either or both of asparaginyl-tRNA or glutaminyl-tRNA synthetases. The reaction takes place in the presence of glutamine and ATP through an activated phospho-Asp-tRNA(Asn) or phospho-Glu-tRNA(Gln). The polypeptide is Aspartyl/glutamyl-tRNA(Asn/Gln) amidotransferase subunit C (Streptococcus agalactiae serotype Ia (strain ATCC 27591 / A909 / CDC SS700)).